The chain runs to 454 residues: Bifunctional protein GlmU (454 aa).

Residues Met-1–Pro-228 are pyrophosphorylase. UDP-N-acetyl-alpha-D-glucosamine-binding positions include Leu-10–Gly-13, Lys-24, Gln-76, Gly-81–Thr-82, Tyr-103–Asp-105, Gly-138, Glu-153, Asn-168, and Asn-226. Asp-105 serves as a coordination point for Mg(2+). Asn-226 is a Mg(2+) binding site. The tract at residues Trp-229–Gln-249 is linker. The N-acetyltransferase stretch occupies residues Gly-250–Lys-454. UDP-N-acetyl-alpha-D-glucosamine-binding residues include Arg-332 and Lys-350. His-362 (proton acceptor) is an active-site residue. Positions 365 and 376 each coordinate UDP-N-acetyl-alpha-D-glucosamine. Acetyl-CoA is bound by residues Ala-379, Asn-385–Tyr-386, Ser-404, Ala-422, and Arg-439.

This sequence in the N-terminal section; belongs to the N-acetylglucosamine-1-phosphate uridyltransferase family. In the C-terminal section; belongs to the transferase hexapeptide repeat family. As to quaternary structure, homotrimer. Mg(2+) is required as a cofactor.

The protein resides in the cytoplasm. It catalyses the reaction alpha-D-glucosamine 1-phosphate + acetyl-CoA = N-acetyl-alpha-D-glucosamine 1-phosphate + CoA + H(+). It carries out the reaction N-acetyl-alpha-D-glucosamine 1-phosphate + UTP + H(+) = UDP-N-acetyl-alpha-D-glucosamine + diphosphate. It functions in the pathway nucleotide-sugar biosynthesis; UDP-N-acetyl-alpha-D-glucosamine biosynthesis; N-acetyl-alpha-D-glucosamine 1-phosphate from alpha-D-glucosamine 6-phosphate (route II): step 2/2. It participates in nucleotide-sugar biosynthesis; UDP-N-acetyl-alpha-D-glucosamine biosynthesis; UDP-N-acetyl-alpha-D-glucosamine from N-acetyl-alpha-D-glucosamine 1-phosphate: step 1/1. Its pathway is bacterial outer membrane biogenesis; LPS lipid A biosynthesis. Its function is as follows. Catalyzes the last two sequential reactions in the de novo biosynthetic pathway for UDP-N-acetylglucosamine (UDP-GlcNAc). The C-terminal domain catalyzes the transfer of acetyl group from acetyl coenzyme A to glucosamine-1-phosphate (GlcN-1-P) to produce N-acetylglucosamine-1-phosphate (GlcNAc-1-P), which is converted into UDP-GlcNAc by the transfer of uridine 5-monophosphate (from uridine 5-triphosphate), a reaction catalyzed by the N-terminal domain. The chain is Bifunctional protein GlmU from Xanthomonas campestris pv. campestris (strain 8004).